Here is a 961-residue protein sequence, read N- to C-terminus: Roundabout homolog 4 (961 aa).

The N-terminal stretch at 1–37 (MGQGEELRAAVDSGGMGLLGTKCPLPLLLLFIMGGKA) is a signal peptide. Ig-like C2-type domains follow at residues 42 to 142 (PQIL…ARLS) and 148 to 235 (EDFR…ARVS). Intrachain disulfides connect Cys63/Cys125 and Cys169/Cys218. Residues Asn211 and Asn257 are each glycosylated (N-linked (GlcNAc...) asparagine). 2 Fibronectin type-III domains span residues 259 to 356 (TLLN…LPEQ) and 358 to 453 (PSAP…LEQA). N-linked (GlcNAc...) asparagine glycans are attached at residues Asn371, Asn400, and Asn407. The segment covering 544-559 (SGSRDLSSSSSLSSRL) has biased composition (low complexity). Disordered stretches follow at residues 544–563 (SGSRDLSSSSSLSSRLGVDP) and 600–634 (QTSSPPVRPSPQTPAARRLPPKLTGTSSPWASSDS). Over residues 623-634 (TGTSSPWASSDS) the composition is skewed to polar residues. 2 N-linked (GlcNAc...) asparagine glycosylation sites follow: Asn691 and Asn723. A disordered region spans residues 726-810 (ELAARPLPPT…SLEEEDQDSV (85 aa)). Over residues 755–769 (LQAPSSDPLPAAPLS) the composition is skewed to low complexity. Residues 770-783 (VLNSSRPSSPQASF) show a composition bias toward polar residues. Residues Asn772 and Asn793 are each glycosylated (N-linked (GlcNAc...) asparagine). Positions 784 to 801 (LSVPSPGSSNLSSSSLSS) are enriched in low complexity. Position 823 is a phosphoserine (Ser823).

Belongs to the immunoglobulin superfamily. ROBO family. As to quaternary structure, interacts with SLIT2 and ENAH.

In terms of biological role, receptor for Slit proteins, at least for SLIT2, and seems to be involved in angiogenesis and vascular patterning. May mediate the inhibition of primary endothelial cell migration by Slit proteins. Involved in the maintenance of endothelial barrier organization and function. This is Roundabout homolog 4 (Robo4) from Rattus norvegicus (Rat).